Reading from the N-terminus, the 157-residue chain is MEGKGFTEEQEALVVKSWNEMKKNSQELGLKFFKKILEIAPAAQQLFSFLKDSTVPLEENPKLKPHAMAVFVMTCESAVQLRKAGKVTVRESNLKRLGATHFKAGVAAEHFEVTKLALLETIKEAVPEMWSPAMKNAWEEAHDQLAEAIKSEMKPSD.

Positions 5 to 154 (GFTEEQEALV…LAEAIKSEMK (150 aa)) constitute a Globin domain. Residues 38–42 (EIAPA) carry the Homodimerization motif. Residues Ser-48, Lys-62, His-66, Arg-96, Thr-100, and His-101 each coordinate heme b. The Homodimerization motif lies at 108-120 (AEHFEVTKLALLE).

It belongs to the plant globin family. In terms of assembly, homodimer. Heme b serves as cofactor. As to expression, predominantly expressed in leaves, to a lower extent in roots, and barely in stems, flowers and seeds.

It is found in the cytoplasm. It localises to the nucleus. The enzyme catalyses Fe(III)-heme b-[protein] + nitric oxide + H2O = Fe(II)-heme b-[protein] + nitrite + 2 H(+). Its function is as follows. Phytoglobin that reduces nitrite to nitric oxide (NO) under anoxic conditions (e.g. during flooding or in waterlogged soil) and upon root nodulation. Required for general plant development and during nodulation, especially for the onset of symbiosis. Monitors nitric oxide (NO) levels during early phase of the nitrogen-fixing symbiosis and buffers oxygen in functioning nodules. May not function as an oxygen storage or transport protein. Has an unusually high affinity for O(2) through a hexacoordinate heme iron because of a very low dissociation constant. Involved in water stress tolerance. This chain is Anaerobic nitrite reductase Hb1, found in Glycine max (Soybean).